A 330-amino-acid chain; its full sequence is D-alanine--D-alanine ligase (330 aa).

One can recognise an ATP-grasp domain in the interval 121–321; sequence NHYLKDFGVK…IKDVMTDIIE (201 aa). Position 149 to 204 (149 to 204) interacts with ATP; that stretch reads VTRLGLPIFVKPNDGGSSFGVTKVKEVSAIQPAIAKAFGEGREVILERFIDGTEVT. 3 residues coordinate Mg(2+): aspartate 275, glutamate 288, and asparagine 290.

Belongs to the D-alanine--D-alanine ligase family. Mg(2+) is required as a cofactor. Mn(2+) serves as cofactor.

It localises to the cytoplasm. The enzyme catalyses 2 D-alanine + ATP = D-alanyl-D-alanine + ADP + phosphate + H(+). The protein operates within cell wall biogenesis; peptidoglycan biosynthesis. Functionally, cell wall formation. This is D-alanine--D-alanine ligase from Parabacteroides distasonis (strain ATCC 8503 / DSM 20701 / CIP 104284 / JCM 5825 / NCTC 11152).